A 373-amino-acid chain; its full sequence is Heterogeneous nuclear ribonucleoprotein A3 homolog 1 (373 aa).

Residues 1-25 (MPRGGMDDHWPSSDDQGHDPKEPEQ) form a disordered region. RRM domains follow at residues 27–110 (RKLF…DSAR) and 118–206 (KKIF…SAQR). Disordered regions lie at residues 196-218 (KQEM…FMGR) and 319-373 (DFGN…GRRF). Over residues 207–218 (GRGGGGSNFMGR) the composition is skewed to gly residues. Residues 319–333 (DFGNYGGQQQSNYGP) show a composition bias toward low complexity. Positions 334–373 (MKGGSFSGRSSGGSGSGPYGGGYGSGGGGGGGGSYGGRRF) are enriched in gly residues.

It is found in the nucleus. This is Heterogeneous nuclear ribonucleoprotein A3 homolog 1 from Xenopus laevis (African clawed frog).